A 410-amino-acid polypeptide reads, in one-letter code: Elongation factor Tu, chloroplastic (410 aa).

Residues 10–214 (KPHINIGTIG…QVDKYIPTPQ (205 aa)) form the tr-type G domain. A G1 region spans residues 19 to 26 (GHVDHGKT). A GTP-binding site is contributed by 19-26 (GHVDHGKT). Thr26 contributes to the Mg(2+) binding site. Residues 60 to 64 (GITIN) are G2. The G3 stretch occupies residues 81–84 (DCPG). GTP contacts are provided by residues 81-85 (DCPGH) and 136-139 (NKED). Positions 136 to 139 (NKED) are G4. Residues 174 to 176 (SAL) form a G5 region.

The protein belongs to the TRAFAC class translation factor GTPase superfamily. Classic translation factor GTPase family. EF-Tu/EF-1A subfamily.

The protein resides in the plastid. The protein localises to the chloroplast. The enzyme catalyses GTP + H2O = GDP + phosphate + H(+). GTP hydrolase that promotes the GTP-dependent binding of aminoacyl-tRNA to the A-site of ribosomes during protein biosynthesis. This is Elongation factor Tu, chloroplastic (tufA) from Mesostigma viride (Green alga).